The primary structure comprises 394 residues: Elongation factor Tu (394 aa).

The tr-type G domain maps to 10 to 204 (KPHVNVGTIG…AVDEWIPTPT (195 aa)). The interval 19 to 26 (GHIDHGKT) is G1. GTP is bound at residue 19-26 (GHIDHGKT). Threonine 26 lines the Mg(2+) pocket. Positions 60-64 (GITIN) are G2. The segment at 81 to 84 (DCPG) is G3. GTP contacts are provided by residues 81 to 85 (DCPGH) and 136 to 139 (NKCD). Residues 136–139 (NKCD) form a G4 region. The tract at residues 174–176 (SAL) is G5.

The protein belongs to the TRAFAC class translation factor GTPase superfamily. Classic translation factor GTPase family. EF-Tu/EF-1A subfamily. In terms of assembly, monomer.

It is found in the cytoplasm. It carries out the reaction GTP + H2O = GDP + phosphate + H(+). Its function is as follows. GTP hydrolase that promotes the GTP-dependent binding of aminoacyl-tRNA to the A-site of ribosomes during protein biosynthesis. This chain is Elongation factor Tu, found in Mycoplasma genitalium (strain ATCC 33530 / DSM 19775 / NCTC 10195 / G37) (Mycoplasmoides genitalium).